Reading from the N-terminus, the 87-residue chain is Type 3 secretion system needle filament protein (87 aa).

The protein belongs to the SctF family. In terms of assembly, the core secretion machinery of the T3SS is composed of approximately 20 different proteins, including cytoplasmic components, a base, an export apparatus and a needle. This subunit polymerizes and forms the helical needle filament. In Y.enterocolitica E40, the needles are composed of 139 (plus-minus 19) YscF/SctF subunits.

The protein localises to the secreted. It localises to the cell surface. The secretion and/or polymerization may be controlled by the type III secretion system regulator YopR. Component of the type III secretion system (T3SS), also called injectisome, which is used to inject bacterial effector proteins into eukaryotic host cells. YscF/SctF forms the external needle filament that protrudes from the bacterial surface. The needle is not sufficient by itself for the formation of a pore allowing translocation of the Yop effectors across the host cell membrane. The polypeptide is Type 3 secretion system needle filament protein (Yersinia enterocolitica).